The primary structure comprises 197 residues: Pyridoxal 5'-phosphate synthase subunit PdxT (197 aa).

53-55 (GES) contacts L-glutamine. The Nucleophile role is filled by Cys-85. Residues Arg-114 and 142-143 (IR) contribute to the L-glutamine site. Active-site charge relay system residues include His-179 and Glu-181.

It belongs to the glutaminase PdxT/SNO family. In terms of assembly, in the presence of PdxS, forms a dodecamer of heterodimers. Only shows activity in the heterodimer.

The enzyme catalyses aldehydo-D-ribose 5-phosphate + D-glyceraldehyde 3-phosphate + L-glutamine = pyridoxal 5'-phosphate + L-glutamate + phosphate + 3 H2O + H(+). The catalysed reaction is L-glutamine + H2O = L-glutamate + NH4(+). It participates in cofactor biosynthesis; pyridoxal 5'-phosphate biosynthesis. Functionally, catalyzes the hydrolysis of glutamine to glutamate and ammonia as part of the biosynthesis of pyridoxal 5'-phosphate. The resulting ammonia molecule is channeled to the active site of PdxS. This Thermococcus kodakarensis (strain ATCC BAA-918 / JCM 12380 / KOD1) (Pyrococcus kodakaraensis (strain KOD1)) protein is Pyridoxal 5'-phosphate synthase subunit PdxT.